A 210-amino-acid polypeptide reads, in one-letter code: MERQARGLLETQSLHEADEDMVTDVDFTSMISEEEKEELKAELAKLEDEISTLRQVLAAKEKHLIEIKQKLGMSLMNELKQNFSKSWHDMQTTSAYKKTHETLSHAGQKATAAISNVGTAISKKFGDMRSHSISYSIRHSISMPAMRNSPTFKSFEEKVETTVTSLKTKVGGTSHTGGSFEEVLSSTAHASAQSSLAGTRLPESEEELQC.

Positions 22-73 form a coiled coil; sequence VTDVDFTSMISEEEKEELKAELAKLEDEISTLRQVLAAKEKHLIEIKQKLGM. The span at 185–197 shows a compositional bias: polar residues; it reads SSTAHASAQSSLA. A disordered region spans residues 185 to 210; sequence SSTAHASAQSSLAGTRLPESEEELQC.

This sequence belongs to the TPD52 family. Forms a homodimer or heterodimer with other members of the family.

The sequence is that of Tumor protein D53 homolog (TPD52L1) from Gallus gallus (Chicken).